Consider the following 222-residue polypeptide: Large ribosomal subunit protein mL64 (222 aa).

Disordered stretches follow at residues 21-47 (RSRS…NLLT) and 186-222 (QRKR…EPSS). Residues 98–207 (TMQESLRLQQ…KKEARIAAMA (110 aa)) are a coiled coil. A Nuclear localization signal motif is present at residues 184 to 200 (KQQRKRLKEERQRQKKE). The segment covering 186-202 (QRKRLKEERQRQKKEAR) has biased composition (basic and acidic residues). A compositionally biased stretch (low complexity) spans 203 to 215 (IAAMASAEAQDSA).

This sequence belongs to the mitochondrion-specific ribosomal protein mL64 family. In terms of assembly, component of the mitochondrial ribosome large subunit (39S) which comprises a 16S rRNA and about 50 distinct proteins. Interacts with GADD45A, GADD45B and GADD45G. Interacts with NR4A1 via the NR4A1 AB domain. Interacts with ATAD3A and ATAD3B.

Its subcellular location is the mitochondrion. It is found in the nucleus. Its function is as follows. Acts as a negative regulator of G1 to S cell cycle phase progression by inhibiting cyclin-dependent kinases. Inhibitory effects are additive with GADD45 proteins but also occur in the absence of GADD45 proteins. Acts as a repressor of the orphan nuclear receptor NR4A1 by inhibiting AB domain-mediated transcriptional activity. May be involved in the hormone-mediated regulation of NR4A1 transcriptional activity. May play a role in mitochondrial protein synthesis. The sequence is that of Large ribosomal subunit protein mL64 (Gadd45gip1) from Mus musculus (Mouse).